An 84-amino-acid chain; its full sequence is Large ribosomal subunit protein bL27 (84 aa).

The interval 1 to 21 (MAHKKGQGSTRNGRDSHSKRL) is disordered. The segment covering 12-21 (NGRDSHSKRL) has biased composition (basic and acidic residues).

The protein belongs to the bacterial ribosomal protein bL27 family.

The chain is Large ribosomal subunit protein bL27 from Methylacidiphilum infernorum (isolate V4) (Methylokorus infernorum (strain V4)).